A 285-amino-acid chain; its full sequence is Inositol oxygenase (285 aa).

Position 29 (arginine 29) interacts with substrate. The residue at position 33 (serine 33) is a Phosphoserine. 85 to 87 (DES) contributes to the substrate binding site. Fe cation contacts are provided by histidine 98, histidine 123, and aspartate 124. Substrate is bound by residues lysine 127 and 141 to 142 (GD). 3 residues coordinate Fe cation: histidine 194, histidine 220, and aspartate 253. 220 to 221 (HS) is a binding site for substrate.

The protein belongs to the myo-inositol oxygenase family. Requires Fe cation as cofactor. Kidney specific.

It is found in the cytoplasm. The catalysed reaction is myo-inositol + O2 = D-glucuronate + H2O + H(+). Its pathway is polyol metabolism; myo-inositol degradation into D-glucuronate; D-glucuronate from myo-inositol: step 1/1. This is Inositol oxygenase (Miox) from Rattus norvegicus (Rat).